Reading from the N-terminus, the 318-residue chain is 2-dehydro-3-deoxygalactonokinase (318 aa).

Substrate contacts are provided by residues 35–39, Y90, 105–107, and R169; these read GAESN and YDR. ATP-binding positions include 167-169, 228-233, and 257-260; these read NYR, TRGEDG, and GTGD. Residues D260 and D296 each coordinate substrate. The active-site Proton acceptor is D260.

This sequence belongs to the carbohydrate kinase PfkB family. As to quaternary structure, homohexamer.

The catalysed reaction is 2-dehydro-3-deoxy-D-galactonate + ATP = 2-dehydro-3-deoxy-6-phospho-D-galactonate + ADP + H(+). Involved in galactose catabolism. Catalyzes the phosphorylation of 2-keto-3-deoxygalactonate (KDGal) to produce 2-keto-3-deoxy-6-phosphogalactonate (KDPGal). Can also phosphorylate 2-keto-3-deoxygluconate (KDG) to 2-keto-3-deoxy-6-phosphogluconate (KDPG), but the catalytic efficiency for KDGal is 50-fold higher than for KDG. This chain is 2-dehydro-3-deoxygalactonokinase, found in Haloferax volcanii (strain ATCC 29605 / DSM 3757 / JCM 8879 / NBRC 14742 / NCIMB 2012 / VKM B-1768 / DS2) (Halobacterium volcanii).